A 110-amino-acid polypeptide reads, in one-letter code: Large ribosomal subunit protein P2 (110 aa).

The segment at 63–110 (ASVPSGGGVAAAAPAAGGGGADPAEAKEEKKEEPEEESDDDMGFGLFD) is disordered. Over residues 86–95 (AEAKEEKKEE) the composition is skewed to basic and acidic residues.

Belongs to the eukaryotic ribosomal protein P1/P2 family. In terms of assembly, P1 and P2 exist as dimers at the large ribosomal subunit. In terms of processing, phosphorylated.

In terms of biological role, plays an important role in the elongation step of protein synthesis. This is Large ribosomal subunit protein P2 from Cryptochiton stelleri (Giant gumboot chiton).